Here is a 77-residue protein sequence, read N- to C-terminus: Conotoxin ArMKLT2-0322 (77 aa).

Positions 1-22 (MKLTCVLIIAVLFLIVCQLNTA) are cleaved as a signal peptide. Positions 23–47 (DDSRDKQEYRAVRLRDAIRNSRGSR) are excised as a propeptide. 3 disulfide bridges follow: cysteine 49–cysteine 62, cysteine 56–cysteine 67, and cysteine 61–cysteine 74.

It belongs to the conotoxin O1 superfamily. Expressed by the venom duct.

It localises to the secreted. In Conus arenatus (Sand-dusted cone), this protein is Conotoxin ArMKLT2-0322.